Consider the following 217-residue polypeptide: 3,4-dihydroxy-2-butanone 4-phosphate synthase (217 aa).

D-ribulose 5-phosphate contacts are provided by residues 37 to 38, Asp-42, 150 to 154, and Glu-174; these read RE and RGGHT. A Mg(2+)-binding site is contributed by Glu-38. A Mg(2+)-binding site is contributed by His-153.

The protein belongs to the DHBP synthase family. As to quaternary structure, homodimer. Requires Mg(2+) as cofactor. Mn(2+) is required as a cofactor.

The catalysed reaction is D-ribulose 5-phosphate = (2S)-2-hydroxy-3-oxobutyl phosphate + formate + H(+). It functions in the pathway cofactor biosynthesis; riboflavin biosynthesis; 2-hydroxy-3-oxobutyl phosphate from D-ribulose 5-phosphate: step 1/1. Its function is as follows. Catalyzes the conversion of D-ribulose 5-phosphate to formate and 3,4-dihydroxy-2-butanone 4-phosphate. This chain is 3,4-dihydroxy-2-butanone 4-phosphate synthase, found in Pectobacterium atrosepticum (strain SCRI 1043 / ATCC BAA-672) (Erwinia carotovora subsp. atroseptica).